The sequence spans 91 residues: Putative pterin-4-alpha-carbinolamine dehydratase (91 aa).

This sequence belongs to the pterin-4-alpha-carbinolamine dehydratase family.

The enzyme catalyses (4aS,6R)-4a-hydroxy-L-erythro-5,6,7,8-tetrahydrobiopterin = (6R)-L-erythro-6,7-dihydrobiopterin + H2O. In Halobacterium salinarum (strain ATCC 29341 / DSM 671 / R1), this protein is Putative pterin-4-alpha-carbinolamine dehydratase.